A 155-amino-acid chain; its full sequence is Microsomal glutathione S-transferase 1 (155 aa).

The Lumenal portion of the chain corresponds to 3–9; sequence NLSQLME. The helical transmembrane segment at 10-33 threads the bilayer; it reads NEVFMAFASYTTIVLSKMNFMSTA. Residues 34–62 are Cytoplasmic-facing; that stretch reads TAFYRLTKKVFANPEDCAGFGKGENAKKY. Residue arginine 38 participates in glutathione binding. 3 positions are modified to N6-acetyllysine: lysine 42, lysine 55, and lysine 60. Residues 63 to 96 traverse the membrane as a helical segment; sequence LRTDDRVERVRRAHLNDLENIVPFLGIGLLYSLS. 4 residues coordinate glutathione: arginine 73, arginine 74, histidine 76, and glutamate 81. Topologically, residues 97–99 are lumenal; sequence GPD. A helical membrane pass occupies residues 100–123; that stretch reads LSTAILHFRLFVRARIYHTIAYLT. Tyrosine 121 contacts glutathione. The Cytoplasmic portion of the chain corresponds to 124–128; that stretch reads PLPQP. A helical membrane pass occupies residues 129-148; that stretch reads NRALAFFIGYGVTLSMAYRL. The Lumenal segment spans residues 149–155; sequence LKSKLYL.

Belongs to the MAPEG family. Homotrimer; The trimer binds only one molecule of glutathione.

Its subcellular location is the endoplasmic reticulum membrane. It is found in the mitochondrion outer membrane. It carries out the reaction RX + glutathione = an S-substituted glutathione + a halide anion + H(+). Functionally, conjugation of reduced glutathione to a wide number of exogenous and endogenous hydrophobic electrophiles. In Bos taurus (Bovine), this protein is Microsomal glutathione S-transferase 1 (MGST1).